The following is a 503-amino-acid chain: GMP synthase [glutamine-hydrolyzing] (503 aa).

The region spanning 1-178 (MREANVYSEI…LHRAAGIPAD (178 aa)) is the Glutamine amidotransferase type-1 domain. The active-site Nucleophile is the cysteine 60. Active-site residues include histidine 152 and glutamate 154. The 199-residue stretch at 179-377 (WNSGNVIADQ…LGLPEVIVGR (199 aa)) folds into the GMPS ATP-PPase domain. An ATP-binding site is contributed by 206–212 (SGGVDSA).

As to quaternary structure, homodimer.

It carries out the reaction XMP + L-glutamine + ATP + H2O = GMP + L-glutamate + AMP + diphosphate + 2 H(+). It functions in the pathway purine metabolism; GMP biosynthesis; GMP from XMP (L-Gln route): step 1/1. Functionally, catalyzes the synthesis of GMP from XMP. This is GMP synthase [glutamine-hydrolyzing] from Leifsonia xyli subsp. xyli (strain CTCB07).